A 1510-amino-acid chain; its full sequence is Chromosome partition protein MukB (1510 aa).

75 to 82 (GGNGAGKS) is an ATP binding site. Residues 346-706 (QHRLVDLSRE…LDEQISRLSQ (361 aa)) are a coiled coil. The flexible hinge stretch occupies residues 707 to 824 (PDGSEDPRLN…EIPLFGCAAR (118 aa)). Coiled coils occupy residues 825-1154 (EKRL…AAKV) and 1248-1304 (IDAI…LQNI).

It belongs to the SMC family. MukB subfamily. As to quaternary structure, homodimerization via its hinge domain. Binds to DNA via its C-terminal region. Interacts, and probably forms a ternary complex, with MukE and MukF via its C-terminal region. The complex formation is stimulated by calcium or magnesium. Interacts with tubulin-related protein FtsZ.

The protein resides in the cytoplasm. It localises to the nucleoid. Functionally, plays a central role in chromosome condensation, segregation and cell cycle progression. Functions as a homodimer, which is essential for chromosome partition. Involved in negative DNA supercoiling in vivo, and by this means organize and compact chromosomes. May achieve or facilitate chromosome segregation by condensation DNA from both sides of a centrally located replisome during cell division. In Haemophilus influenzae (strain ATCC 51907 / DSM 11121 / KW20 / Rd), this protein is Chromosome partition protein MukB.